A 318-amino-acid chain; its full sequence is Aldo-keto reductase family 1 member C21 (318 aa).

20-24 is an NADP(+) binding site; that stretch reads GFGTA. Lys31 contributes to the substrate binding site. Asp50 contacts NADP(+). The Proton donor role is filled by Tyr55. His117 lines the substrate pocket. Residues 166–167, Gln190, 216–224, and 270–280 contribute to the NADP(+) site; these read SN, YGVLGTQRY, and TSLKEERIKEN.

This sequence belongs to the aldo/keto reductase family. In terms of assembly, monomer.

It is found in the cytoplasm. It catalyses the reaction androsterone + NADP(+) = 5alpha-androstan-3,17-dione + NADPH + H(+). The enzyme catalyses androsterone + NAD(+) = 5alpha-androstan-3,17-dione + NADH + H(+). NADP-dependent 17-alpha-hydroxysteroid dehydrogenase that converts 5-alpha-androstane-3,17-dione into androsterone. Has lower 3-alpha-hydroxysteroid dehydrogenase activity. Has broad substrate specificity and acts on various 17-alpha-hydroxysteroids, 17-ketosteroids, 3-alpha hydroxysteroids and 3-ketosteroids. Reduction of keto groups is strictly stereoselective. Reduction of 17-ketosteroids yields only 17-alpha-hydroxysteroids. Likewise, reduction of 3-ketosteroids yields only 3-alpha-hydroxysteroids. This chain is Aldo-keto reductase family 1 member C21 (Akr1c21), found in Rattus norvegicus (Rat).